Here is a 93-residue protein sequence, read N- to C-terminus: YcgL domain-containing protein VFMJ11_1829 (93 aa).

The 84-residue stretch at 1–84 (MFCSIYKSTK…PPENLLEKYK (84 aa)) folds into the YcgL domain.

The protein is YcgL domain-containing protein VFMJ11_1829 of Aliivibrio fischeri (strain MJ11) (Vibrio fischeri).